We begin with the raw amino-acid sequence, 458 residues long: Tubulin beta chain (458 aa).

Positions 11, 69, 138, 142, 143, 144, 204, and 226 each coordinate GTP. Glu69 provides a ligand contact to Mg(2+). Residues 426-458 are disordered; sequence EAATVEGEEEEDEYAEGGVVNGDQSYDEPYQAA. A compositionally biased stretch (acidic residues) spans 431-440; the sequence is EGEEEEDEYA.

Belongs to the tubulin family. Dimer of alpha and beta chains. A typical microtubule is a hollow water-filled tube with an outer diameter of 25 nm and an inner diameter of 15 nM. Alpha-beta heterodimers associate head-to-tail to form protofilaments running lengthwise along the microtubule wall with the beta-tubulin subunit facing the microtubule plus end conferring a structural polarity. Microtubules usually have 13 protofilaments but different protofilament numbers can be found in some organisms and specialized cells. Mg(2+) serves as cofactor.

The protein localises to the cytoplasm. The protein resides in the cytoskeleton. Its function is as follows. Tubulin is the major constituent of microtubules, a cylinder consisting of laterally associated linear protofilaments composed of alpha- and beta-tubulin heterodimers. Microtubules grow by the addition of GTP-tubulin dimers to the microtubule end, where a stabilizing cap forms. Below the cap, tubulin dimers are in GDP-bound state, owing to GTPase activity of alpha-tubulin. This Pyropia yezoensis (Susabi-nori) protein is Tubulin beta chain (TUBB1).